We begin with the raw amino-acid sequence, 229 residues long: Heptaprenylglyceryl phosphate synthase (229 aa).

Position 12 (lysine 12) interacts with sn-glycerol 1-phosphate. Positions 14 and 40 each coordinate Mg(2+). Residues 159–164 (YLEYSG), glycine 189, and 209–210 (GN) each bind sn-glycerol 1-phosphate.

The protein belongs to the GGGP/HepGP synthase family. Group I subfamily. Homodimer. Mg(2+) serves as cofactor.

The catalysed reaction is sn-glycerol 1-phosphate + all-trans-heptaprenyl diphosphate = 3-heptaprenyl-sn-glycero-1-phosphate + diphosphate. The protein operates within membrane lipid metabolism; glycerophospholipid metabolism. Functionally, prenyltransferase that catalyzes in vivo the transfer of the heptaprenyl moiety of heptaprenyl pyrophosphate (HepPP; 35 carbon atoms) to the C3 hydroxyl of sn-glycerol-1-phosphate (G1P), producing heptaprenylglyceryl phosphate (HepGP). This reaction is an ether-bond-formation step in the biosynthesis of archaea-type G1P-based membrane lipids found in Bacillales. This Bacillus cereus (strain ATCC 10987 / NRS 248) protein is Heptaprenylglyceryl phosphate synthase.